The chain runs to 242 residues: Ribonuclease 3 (242 aa).

Residues 12–139 form the RNase III domain; that stretch reads ANELLEALGT…LIGATFLEHG (128 aa). Glutamate 51 lines the Mg(2+) pocket. The active site involves aspartate 55. Residues aspartate 125 and glutamate 128 each coordinate Mg(2+). Glutamate 128 is a catalytic residue. Residues 165-236 form the DRBM domain; the sequence is LDWKTSLTVK…AEAGWKSLDS (72 aa).

Belongs to the ribonuclease III family. Homodimer. Mg(2+) serves as cofactor.

It localises to the cytoplasm. The enzyme catalyses Endonucleolytic cleavage to 5'-phosphomonoester.. Digests double-stranded RNA. Involved in the processing of primary rRNA transcript to yield the immediate precursors to the large and small rRNAs (23S and 16S). Processes some mRNAs, and tRNAs when they are encoded in the rRNA operon. Processes pre-crRNA and tracrRNA of type II CRISPR loci if present in the organism. The polypeptide is Ribonuclease 3 (Bifidobacterium longum (strain NCC 2705)).